The primary structure comprises 469 residues: Probable periplasmic serine endoprotease DegP-like (469 aa).

The first 25 residues, 1–25, serve as a signal peptide directing secretion; the sequence is MNRLLKQVCMVVVSSFMMASMLTHA. Active-site charge relay system residues include H114, D144, and S217. Residues 215–217 and 272–276 contribute to the substrate site; these read GNS and LGVLI. 2 PDZ domains span residues 261-352 and 358-458; these read LKSD…YRDG and SVTL…IRQG.

Belongs to the peptidase S1C family.

It localises to the periplasm. The catalysed reaction is Acts on substrates that are at least partially unfolded. The cleavage site P1 residue is normally between a pair of hydrophobic residues, such as Val-|-Val.. Might be efficient in the degradation of transiently denatured and unfolded proteins which accumulate in the periplasm following stress conditions. The protein is Probable periplasmic serine endoprotease DegP-like of Marinomonas sp. (strain MWYL1).